Here is a 163-residue protein sequence, read N- to C-terminus: Type-1 angiotensin II receptor-associated protein-like (163 aa).

Over 1-28 the chain is Extracellular; sequence MELPAVNLKAIVFTHWLLTVFACMIDWL. The chain crosses the membrane as a helical span at residues 29 to 49; it reads PKAYGLANITILAMGVWAIAQ. Topologically, residues 50–55 are cytoplasmic; the sequence is RDSIDA. The chain crosses the membrane as a helical span at residues 56–76; the sequence is IFMFLIGLLLTILTDILLFAL. Over 77–95 the chain is Extracellular; the sequence is YFTEAEKASESGPLRDLFR. Residues 96–116 traverse the membrane as a helical segment; sequence FSSGMGIFSLLLKPLSCFFMY. Residues 117 to 163 are Cytoplasmic-facing; sequence HMYRERGGEYFVNLGFITLSRDRSSYQSIEHMDPPADQDNKLPSRTY.

The protein resides in the membrane. Functionally, appears to be a negative regulator of angiotensin II type I receptor-mediated signaling. The polypeptide is Type-1 angiotensin II receptor-associated protein-like (agtrap) (Xenopus tropicalis (Western clawed frog)).